Reading from the N-terminus, the 282-residue chain is D-alanine aminotransferase (282 aa).

Residue Y32 participates in substrate binding. R51 contacts pyridoxal 5'-phosphate. R99 and H101 together coordinate substrate. K146 functions as the Proton acceptor in the catalytic mechanism. K146 carries the post-translational modification N6-(pyridoxal phosphate)lysine. E178 contacts pyridoxal 5'-phosphate.

It belongs to the class-IV pyridoxal-phosphate-dependent aminotransferase family. Homodimer. Requires pyridoxal 5'-phosphate as cofactor.

The catalysed reaction is D-alanine + 2-oxoglutarate = D-glutamate + pyruvate. In terms of biological role, acts on the D-isomers of alanine, leucine, aspartate, glutamate, aminobutyrate, norvaline and asparagine. The enzyme transfers an amino group from a substrate D-amino acid to the pyridoxal phosphate cofactor to form pyridoxamine and an alpha-keto acid in the first half-reaction. The second half-reaction is the reverse of the first, transferring the amino group from the pyridoxamine to a second alpha-keto acid to form the product D-amino acid via a ping-pong mechanism. This is an important process in the formation of D-alanine and D-glutamate, which are essential bacterial cell wall components. The protein is D-alanine aminotransferase (dat) of Staphylococcus aureus (strain COL).